The sequence spans 332 residues: Holliday junction branch migration complex subunit RuvB (332 aa).

Residues 1–181 (MTRFLDSDAM…FGITGHMEYY (181 aa)) form a large ATPase domain (RuvB-L) region. ATP-binding positions include leucine 20, arginine 21, glycine 62, lysine 65, threonine 66, threonine 67, 128 to 130 (EDF), arginine 171, tyrosine 181, and arginine 218. Mg(2+) is bound at residue threonine 66. A small ATPAse domain (RuvB-S) region spans residues 182–252 (EENDLTEIIE…ITDKALTMLD (71 aa)). The tract at residues 255–332 (HEGLDYVDQK…EHLGYQRFDK (78 aa)) is head domain (RuvB-H). The DNA site is built by arginine 291, arginine 310, arginine 312, and arginine 315.

It belongs to the RuvB family. Homohexamer. Forms an RuvA(8)-RuvB(12)-Holliday junction (HJ) complex. HJ DNA is sandwiched between 2 RuvA tetramers; dsDNA enters through RuvA and exits via RuvB. An RuvB hexamer assembles on each DNA strand where it exits the tetramer. Each RuvB hexamer is contacted by two RuvA subunits (via domain III) on 2 adjacent RuvB subunits; this complex drives branch migration. In the full resolvosome a probable DNA-RuvA(4)-RuvB(12)-RuvC(2) complex forms which resolves the HJ.

It localises to the cytoplasm. The catalysed reaction is ATP + H2O = ADP + phosphate + H(+). The RuvA-RuvB-RuvC complex processes Holliday junction (HJ) DNA during genetic recombination and DNA repair, while the RuvA-RuvB complex plays an important role in the rescue of blocked DNA replication forks via replication fork reversal (RFR). RuvA specifically binds to HJ cruciform DNA, conferring on it an open structure. The RuvB hexamer acts as an ATP-dependent pump, pulling dsDNA into and through the RuvAB complex. RuvB forms 2 homohexamers on either side of HJ DNA bound by 1 or 2 RuvA tetramers; 4 subunits per hexamer contact DNA at a time. Coordinated motions by a converter formed by DNA-disengaged RuvB subunits stimulates ATP hydrolysis and nucleotide exchange. Immobilization of the converter enables RuvB to convert the ATP-contained energy into a lever motion, pulling 2 nucleotides of DNA out of the RuvA tetramer per ATP hydrolyzed, thus driving DNA branch migration. The RuvB motors rotate together with the DNA substrate, which together with the progressing nucleotide cycle form the mechanistic basis for DNA recombination by continuous HJ branch migration. Branch migration allows RuvC to scan DNA until it finds its consensus sequence, where it cleaves and resolves cruciform DNA. This Streptococcus agalactiae serotype V (strain ATCC BAA-611 / 2603 V/R) protein is Holliday junction branch migration complex subunit RuvB.